A 68-amino-acid polypeptide reads, in one-letter code: Movement protein TGBp3 (68 aa).

Over 1–6 (MFSGKE) the chain is Lumenal. Residues 7 to 26 (ITLFALSTLIALIVLNYMSA) traverse the membrane as a helical segment. Residues 27–68 (TPNPVCLIELTGHSAVLRGNNCESLTSGVIEALSAHLHGLRN) are Cytoplasmic-facing.

Belongs to the Tymovirales TGBp3 protein family.

The protein localises to the host endoplasmic reticulum membrane. Functionally, plays a role in viral cell-to-cell propagation, by facilitating genome transport to neighboring plant cells through plasmosdesmata. May induce the formation of granular vesicles derived from the Endoplasmic reticulum, which align on actin filaments. The sequence is that of Movement protein TGBp3 from Papaya mosaic potexvirus (PMV).